A 158-amino-acid chain; its full sequence is Transcription elongation factor GreA (158 aa).

Positions 45–73 (AEYHAAREQQSFIEGRIKQLESELSHAEI) form a coiled coil.

This sequence belongs to the GreA/GreB family.

Functionally, necessary for efficient RNA polymerase transcription elongation past template-encoded arresting sites. The arresting sites in DNA have the property of trapping a certain fraction of elongating RNA polymerases that pass through, resulting in locked ternary complexes. Cleavage of the nascent transcript by cleavage factors such as GreA or GreB allows the resumption of elongation from the new 3'terminus. GreA releases sequences of 2 to 3 nucleotides. This chain is Transcription elongation factor GreA, found in Xanthomonas axonopodis pv. citri (strain 306).